The following is a 95-amino-acid chain: Phosphoribosyl-ATP pyrophosphatase (95 aa).

This sequence belongs to the PRA-PH family.

The protein localises to the cytoplasm. It carries out the reaction 1-(5-phospho-beta-D-ribosyl)-ATP + H2O = 1-(5-phospho-beta-D-ribosyl)-5'-AMP + diphosphate + H(+). It functions in the pathway amino-acid biosynthesis; L-histidine biosynthesis; L-histidine from 5-phospho-alpha-D-ribose 1-diphosphate: step 2/9. The chain is Phosphoribosyl-ATP pyrophosphatase from Methanocella arvoryzae (strain DSM 22066 / NBRC 105507 / MRE50).